Reading from the N-terminus, the 30-residue chain is Mejucin (30 aa).

Its subcellular location is the secreted. Bacteriocin that inhibits the growth of several Gram-positive bacteria, especially the food-borne pathogens L.monocytogenes, B.cereus strain ATCC 11778, B.cereus strain ATCC 21366, B.cereus strain ATCC 10876 and B.cereus strain ATCC 14579. Likely to act by disrupting the pathogen membrane resulting in leakage of intracellular constituents. Does not inhibit the growth of Gram-negative bacteria. This Bacillus subtilis protein is Mejucin.